Consider the following 395-residue polypeptide: Guanine nucleotide-binding protein subunit beta-5b (395 aa).

7 WD repeats span residues 103 to 142, 145 to 184, 193 to 234, 235 to 276, 279 to 318, 320 to 362, and 365 to 395; these read GHGNKVLCMDWCRDKRRIVSSSQDGKVIVWDAYTTNKEHA, MPCTWVMACAYAPSGCAVACGGLDNKCSVYPLSLDKNENL, MHTN…QSFH, GHSA…NVQS, THDSDINSVKYYPSGDAFASGSDDATCRLYDLRADREVAI, SKDS…RVAI, and GHENRVSTVRVSPDGTAFCSGSWDNTLRIWA.

It belongs to the WD repeat G protein beta family. As to quaternary structure, may interact with RGS9; this interaction stabilizes both proteins and increases RGS9 GTPase-activating protein (GAP) activity, hence accelerating the deactivation of D(2) dopamine receptor-mediated signaling.

It localises to the membrane. Enhances GTPase-activating protein (GAP) activity of regulator of G protein signaling (RGS) proteins, such as RGS7 and RGS9, hence involved in the termination of the signaling initiated by the G protein coupled receptors (GPCRs) by accelerating the GTP hydrolysis on the G-alpha subunits, thereby promoting their inactivation. Increases RGS7 GTPase-activating protein (GAP) activity, thereby regulating mood and cognition. Increases RGS9 GTPase-activating protein (GAP) activity, hence contributes to the deactivation of G protein signaling initiated by D(2) dopamine receptors. Along with gnb5a, plays an important role in neuronal signaling, including in the parasympathetic, but not sympathetic, control of heart rate. This is Guanine nucleotide-binding protein subunit beta-5b from Danio rerio (Zebrafish).